Consider the following 1323-residue polypeptide: Inositol hexakisphosphate and diphosphoinositol-pentakisphosphate kinase (1323 aa).

26–27 (RK) is a substrate binding site. Residues arginine 109, lysine 162, histidine 169, arginine 188, 212–215 (EEFI), and 221–223 (DVK) each bind ATP. Position 188 to 189 (188 to 189 (RK)) interacts with substrate. Substrate is bound by residues lysine 223 and arginine 237. ATP-binding positions include aspartate 284 and 296–298 (DVN). 301–304 (SFVK) contributes to the substrate binding site. Positions 355–426 (TTPSGKLAEL…VLELARALVI (72 aa)) are polyphosphoinositide-binding domain. Polar residues-rich tracts occupy residues 933–947 (FNLS…SSRS) and 977–992 (VTPT…NDDL). Disordered regions lie at residues 933–1022 (FNLS…SEDD), 1043–1107 (AMAD…GGGK), and 1134–1155 (IVIP…ASER). Over residues 993 to 1006 (SISSNAESTAAEST) the composition is skewed to low complexity. Residues 1062–1074 (KSMEEGDKPHGEW) show a composition bias toward basic and acidic residues. The span at 1090 to 1101 (SNEMESNNESME) shows a compositional bias: low complexity.

The protein belongs to the histidine acid phosphatase family. VIP1 subfamily.

The protein resides in the cytoplasm. It localises to the cytosol. It catalyses the reaction 1D-myo-inositol hexakisphosphate + ATP = 1-diphospho-1D-myo-inositol 2,3,4,5,6-pentakisphosphate + ADP. The enzyme catalyses 5-diphospho-1D-myo-inositol 1,2,3,4,6-pentakisphosphate + ATP + H(+) = 1,5-bis(diphospho)-1D-myo-inositol 2,3,4,6-tetrakisphosphate + ADP. In terms of biological role, bifunctional inositol kinase that acts in concert with the IP6K kinases to synthesize the diphosphate group-containing inositol pyrophosphates diphosphoinositol pentakisphosphate, PP-InsP5, and bis-diphosphoinositol tetrakisphosphate, (PP)2-InsP4. PP-InsP5 and (PP)2-InsP4, also respectively called InsP7 and InsP8, may regulate a variety of cellular processes, including apoptosis, vesicle trafficking, cytoskeletal dynamics, and exocytosis. Phosphorylates inositol hexakisphosphate (InsP6) at position 1 to produce PP-InsP5 which is in turn phosphorylated by IP6Ks to produce (PP)2-InsP4. Alternatively, phosphorylates PP-InsP5 at position 1, produced by IP6Ks from InsP6, to produce (PP)2-InsP4. This Caenorhabditis elegans protein is Inositol hexakisphosphate and diphosphoinositol-pentakisphosphate kinase.